Consider the following 1042-residue polypeptide: SWI/SNF-related matrix-associated actin-dependent regulator of chromatin subfamily A member 1 (1042 aa).

Positions 25–82 are disordered; sequence EDEQPGPSTSQEEGAAAAATEATAATEKGEKKKEKNVSSFQLKLAAKAPKSEKEMDPE. Low complexity predominate over residues 36–50; that stretch reads EEGAAAAATEATAAT. Composition is skewed to basic and acidic residues over residues 51–60 and 73–82; these read EKGEKKKEKN and PKSEKEMDPE. Phosphoserine is present on residues Ser116 and Ser119. The Helicase ATP-binding domain occupies 195 to 360; the sequence is ISLYENGVNG…WALLNFLLPD (166 aa). 208-215 is an ATP binding site; sequence DEMGLGKT. Positions 311 to 314 match the DEAH box motif; the sequence is DEAH. One can recognise a Helicase C-terminal domain in the interval 490–641; sequence VLDKLLAKLK…SIVIQQGRLI (152 aa). Glycyl lysine isopeptide (Lys-Gly) (interchain with G-Cter in SUMO2) cross-links involve residues Lys650, Lys716, and Lys738. The disordered stretch occupies residues 819–849; the sequence is EQKKIDGAEPLTPEETEEKEKLLTQGFTNWT. Residues 828–837 show a composition bias toward basic and acidic residues; it reads PLTPEETEEK. The SANT 1 domain maps to 843–895; sequence QGFTNWTKRDFNQFIKANEKYGRDDIDNIAREVEGKSPEEVMEYSAVFWERCN. Residue Tyr942 is modified to Phosphotyrosine. The SANT 2 domain occupies 946–1010; the sequence is KGKNYTEEED…QRRCNTLISL (65 aa).

Belongs to the SNF2/RAD54 helicase family. ISWI subfamily. In terms of assembly, may form homodimers. Component of the ACF-1 ISWI chromatin remodeling complex at least composed of SMARCA1 and BAZ1A, which regulates the spacing of histone octamers on the DNA template to facilitate access to DNA. Within the complex interacts with BAZ1A; the interaction is direct. Component of the WICH-1 ISWI chromatin remodeling complex at least composed of SMARCA1 and BAZ1B/WSTF. Within the complex interacts with BAZ1B/WSTF. Component of the NoRC-1 ISWI chromatin remodeling complex at least composed of SMARCA1 and BAZ2A/TIP5. Within the complex interacts with BAZ2A/TIP5. Component of the BRF-1 ISWI chromatin remodeling complex at least composed of SMARCA1 and BAZ2B. Within the complex interacts with BAZ2B. Component of the NURF-1 ISWI chromatin remodeling complex (also called the nucleosome-remodeling factor (NURF) complex) at least composed of SMARCA1, BPTF, RBBP4 and RBBP7. Within the complex interacts with BPTF. Within the complex interacts with RBBP4 and RBBP7. Component of the CERF-1 ISWI chromatin remodeling complex (also called the CECR2-containing-remodeling factor (CERF) complex) at least composed of CECR2 and SMARCA1. LUZP1 is detected as part of the CERF-1 complex in embryonic stem cells where it is involved in complex stabilization but is not detected in the complex in the testis. Component of the RSF-1 ISWI chromatin remodeling complex at least composed of SMARCA1 and RSF1. Within the complex interacts with RSF1. Interacts with PRLR. Interacts with ERCC6. May form homodimers. Component of the BPFT-SMARCA1 complex at least composed of SMARCA1, BPFT, RBBP4 and RBBP7; the complex is catalytically inactive and does not remodel chromatin. Within the complex interacts with BPTF, RBBP4 and RBBP7. Component of the BAZ1A-1-SMARCA1 complex at least composed of SMARCA1 and BAZ1A; the complex is catalytically inactive and does not remodel chromatin. Component of the BAZ1B-1-SMARCA1 complex at least composed of SMARCA1 and BAZ1B; the complex is catalytically inactive and does not remodel chromatin. In terms of tissue distribution, expressed in lung, breast, kidney, ovary, skeletal muscle and brain. Mainly expressed in non-neuronal tissues such as lung, breast, kidney, and ovary.

The protein resides in the nucleus. It is found in the chromosome. The enzyme catalyses ATP + H2O = ADP + phosphate + H(+). Functionally, ATPase that possesses intrinsic ATP-dependent chromatin-remodeling activity. ATPase activity is substrate-dependent, and is increased when nucleosomes are the substrate, but is also catalytically active when DNA alone is the substrate. Catalytic subunit of ISWI chromatin-remodeling complexes, which form ordered nucleosome arrays on chromatin and facilitate access to DNA during DNA-templated processes such as DNA replication, transcription, and repair. Within the ISWI chromatin-remodeling complexes, slides edge- and center-positioned histone octamers away from their original location on the DNA template. Catalytic activity and histone octamer sliding propensity is regulated and determined by components of the ISWI chromatin-remodeling complexes. The BAZ1A-, BAZ1B-, BAZ2A- and BAZ2B-containing ISWI chromatin-remodeling complexes regulate the spacing of nucleosomes along the chromatin and have the ability to slide mononucleosomes to the center of a DNA template. The CECR2- and RSF1-containing ISWI chromatin-remodeling complexes do not have the ability to slide mononucleosomes to the center of a DNA template. Within the NURF-1 and CERF-1 ISWI chromatin remodeling complexes, nucleosomes are the preferred substrate for its ATPase activity. Within the NURF-1 ISWI chromatin-remodeling complex, binds to the promoters of En1 and En2 to positively regulate their expression and promote brain development. May promote neurite outgrowth. May be involved in the development of luteal cells. Facilitates nucleosome assembly during DNA replication, ensuring replication fork progression and genomic stability by preventing replication stress and nascent DNA gaps. Its function is as follows. Catalytically inactive when either DNA or nucleosomes are the substrate and does not possess chromatin-remodeling activity. Acts as a negative regulator of chromatin remodelers by generating inactive complexes. This is SWI/SNF-related matrix-associated actin-dependent regulator of chromatin subfamily A member 1 from Homo sapiens (Human).